Here is a 515-residue protein sequence, read N- to C-terminus: Bifunctional pantoate ligase/cytidylate kinase (515 aa).

The segment at 1-279 is pantoate--beta-alanine ligase; sequence MKVVETVARL…VGSTRLIDNV (279 aa). Position 31 to 38 (31 to 38) interacts with ATP; it reads MGALHEGH. The active-site Proton donor is His38. Residue Gln62 participates in (R)-pantoate binding. A beta-alanine-binding site is contributed by Gln62. 149-152 contacts ATP; the sequence is GQKD. Residue Gln155 coordinates (R)-pantoate. Residues Val178 and 186–189 contribute to the ATP site; that span reads LSSR. Positions 280–515 are cytidylate kinase; the sequence is VLGQHHERRP…LYRDKVGGSV (236 aa).

It in the N-terminal section; belongs to the pantothenate synthetase family. The protein in the C-terminal section; belongs to the cytidylate kinase family. Type 1 subfamily.

It is found in the cytoplasm. The enzyme catalyses (R)-pantoate + beta-alanine + ATP = (R)-pantothenate + AMP + diphosphate + H(+). It carries out the reaction CMP + ATP = CDP + ADP. The catalysed reaction is dCMP + ATP = dCDP + ADP. The protein operates within cofactor biosynthesis; (R)-pantothenate biosynthesis; (R)-pantothenate from (R)-pantoate and beta-alanine: step 1/1. Functionally, catalyzes the condensation of pantoate with beta-alanine in an ATP-dependent reaction via a pantoyl-adenylate intermediate. In terms of biological role, catalyzes the transfer of a phosphate group from ATP to either CMP or dCMP to form CDP or dCDP and ADP, respectively. The polypeptide is Bifunctional pantoate ligase/cytidylate kinase (Gloeobacter violaceus (strain ATCC 29082 / PCC 7421)).